A 617-amino-acid chain; its full sequence is Leucine aminopeptidase 2 (617 aa).

Residues 139–141 (QCQ) and 271–276 (PYGGME) contribute to the a peptide site. Histidine 300 contacts Zn(2+). Glutamate 301 (proton acceptor) is an active-site residue. Zn(2+) contacts are provided by histidine 304 and glutamate 323. Residue tyrosine 388 is the Proton donor of the active site.

The protein belongs to the peptidase M1 family. It depends on Zn(2+) as a cofactor.

It is found in the cytoplasm. The protein localises to the nucleus. The catalysed reaction is an epoxide + H2O = an ethanediol. Functionally, aminopeptidase that preferentially cleaves di- and tripeptides. Also has low epoxide hydrolase activity (in vitro). Can hydrolyze the epoxide leukotriene LTA(4) but it forms preferentially 5,6-dihydroxy-7,9,11,14-eicosatetraenoic acid rather than the cytokine leukotriene B(4) as the product compared to the homologous mammalian enzyme (in vitro). The sequence is that of Leucine aminopeptidase 2 from Aspergillus terreus (strain NIH 2624 / FGSC A1156).